An 885-amino-acid chain; its full sequence is Chitobiase (885 aa).

The first 27 residues, 1 to 27 (MNAFKLSALARLTATMGFLGGMGSAMA), serve as a signal peptide directing secretion. 3 disulfides stabilise this stretch: cysteine 56–cysteine 66, cysteine 400–cysteine 408, and cysteine 505–cysteine 578. Glutamate 540 serves as the catalytic Proton donor. The interval 866-885 (EVQVRSVSPDGKRYSRAEKV) is disordered. The segment covering 875-885 (DGKRYSRAEKV) has biased composition (basic and acidic residues).

It belongs to the glycosyl hydrolase 20 family. Monomer.

The protein localises to the periplasm. The enzyme catalyses Hydrolysis of terminal non-reducing N-acetyl-D-hexosamine residues in N-acetyl-beta-D-hexosaminides.. The protein operates within glycan degradation; chitin degradation. Its function is as follows. Digests the beta-1,4-glycosidic bonds in N-acetylglucosamine (GlcNAc) oligomers (mainly dimers). The sequence is that of Chitobiase (chb) from Serratia marcescens.